Reading from the N-terminus, the 260-residue chain is Alpha-acetolactate decarboxylase (260 aa).

Belongs to the alpha-acetolactate decarboxylase family.

The enzyme catalyses (2S)-2-acetolactate + H(+) = (R)-acetoin + CO2. Its pathway is polyol metabolism; (R,R)-butane-2,3-diol biosynthesis; (R,R)-butane-2,3-diol from pyruvate: step 2/3. Its function is as follows. Converts acetolactate into acetoin. The protein is Alpha-acetolactate decarboxylase (budA) of Methylococcus capsulatus (strain ATCC 33009 / NCIMB 11132 / Bath).